A 212-amino-acid polypeptide reads, in one-letter code: MSKGFLVSLEGPEGAGKTSVLEALLPILEVKGVKVLTTREPGGVLIGEKIREVILDPSHTQMDAKTELLLYIASRRQHLVEKVLPALEAGKLVIMDRFIDSSVAYQGFGRGLDIEAIDWLNQFATDGLKPDLTLYFDIEVEEGLARIAANSDREVNRLDLEGLDLHKKVRQGYLSLLEKEGNRIVKIDASLPLEQVVETTKAVLFDGMGLAK.

An ATP-binding site is contributed by 11-18 (GPEGAGKT).

This sequence belongs to the thymidylate kinase family.

The catalysed reaction is dTMP + ATP = dTDP + ADP. Its function is as follows. Phosphorylation of dTMP to form dTDP in both de novo and salvage pathways of dTTP synthesis. This Streptococcus pneumoniae (strain Hungary19A-6) protein is Thymidylate kinase.